Reading from the N-terminus, the 601-residue chain is MAEKNSHIRNFSIIAHIDHGKSTLADRLLEHTGTVTKREAQAQFLDNMELERERGITIKAQTVRMKYRAKDGRDYELNLIDTPGHVDFAYEVSRSMAACEGAILVVDATQGVEAQTLANVYQALDHDLEIVPVINKIDLPSADVEGVRQEIEEVIGLDAKDAVPASAKEGIGIGEILEQIVHRVPAPEGDPDAPLKAIVFDSWYDSYRGVVMLVRVFEGTVRPKQKIRLWSNRKEFEVQELGVFAPFAKAVGELQAGEVGVVVANVKDVHDAKVGDTITDAARPTEEPFPGFKVVKPMVFSGVFPIEAADYEQLRDALEKLSLNDSAFTYEPETSQALGFGFRCGYLGLLHMEIVQERLEREYQLALITTAPSVVYRVTDTSGAVEEIDNPAKLPPVQKIAKLEEPHLTCHIHARTEDVGAILKLCQERRGLQRDLKYLGTKRVQITYDIPLAEVVFDFFDKLKSVSRGYASLDYELKGYEEADLVKLDILINGEPVDALSVIVHRERAYQRGRDLCQRLREVIPKQMYEVAIQAAIGAKVIARETVKAFRKNVLAKCYGGDISRKRKLLEKQKEGKKRMKQVGSVEIPQEAFLAVLKVEE.

The tr-type G domain maps to 6–188 (SHIRNFSIIA…QIVHRVPAPE (183 aa)). GTP-binding positions include 18–23 (DHGKST) and 135–138 (NKID).

Belongs to the TRAFAC class translation factor GTPase superfamily. Classic translation factor GTPase family. LepA subfamily.

Its subcellular location is the cell inner membrane. It carries out the reaction GTP + H2O = GDP + phosphate + H(+). Required for accurate and efficient protein synthesis under certain stress conditions. May act as a fidelity factor of the translation reaction, by catalyzing a one-codon backward translocation of tRNAs on improperly translocated ribosomes. Back-translocation proceeds from a post-translocation (POST) complex to a pre-translocation (PRE) complex, thus giving elongation factor G a second chance to translocate the tRNAs correctly. Binds to ribosomes in a GTP-dependent manner. The polypeptide is Elongation factor 4 (Anaeromyxobacter sp. (strain K)).